The sequence spans 863 residues: Leucine--tRNA ligase (863 aa).

Residues 42-53 (PYPSGSGLHVGH) carry the 'HIGH' region motif. The short motif at 635 to 639 (KMSKS) is the 'KMSKS' region element. An ATP-binding site is contributed by Lys-638.

This sequence belongs to the class-I aminoacyl-tRNA synthetase family.

Its subcellular location is the cytoplasm. The catalysed reaction is tRNA(Leu) + L-leucine + ATP = L-leucyl-tRNA(Leu) + AMP + diphosphate. The sequence is that of Leucine--tRNA ligase from Salinibacter ruber (strain DSM 13855 / M31).